The following is a 407-amino-acid chain: D-mannose isomerase (407 aa).

Catalysis depends on proton donor/acceptor residues H251 and H383.

It belongs to the N-acylglucosamine 2-epimerase family. In terms of assembly, homodimer.

It carries out the reaction D-mannose = D-fructose. The catalysed reaction is D-lyxose = D-xylulose. With respect to regulation, significantly inhibited by divalent metal ions such as Cu(2+), Cd(2+) or Ca(2+). In terms of biological role, catalyzes the reversible isomerization of D-mannose to D-fructose. Shows weaker activity on D-lyxose, but cannot use N-acetyl D-glucosamine. In Thermobifida fusca (Thermomonospora fusca), this protein is D-mannose isomerase.